The sequence spans 168 residues: Bcl2-associated agonist of cell death (168 aa).

Methionine 1 is modified (N-acetylmethionine). The interval methionine 1–tryptophan 105 is disordered. Serine 25 carries the phosphoserine modification. The span at serine 49–histidine 60 shows a compositional bias: polar residues. Residues serine 75 and serine 91 each carry the phosphoserine modification. Residues arginine 94 and arginine 96 each carry the asymmetric dimethylarginine; by PRMT1 modification. Phosphoserine is present on serine 97. A Phosphoserine; by PKA, PKB, PAK1, RPS6KA1, RPS6KB1 and PKC/PRKCQ modification is found at serine 99. Serine 99 carries the post-translational modification Phosphoserine; by PKB/AKT1. The short motif at tyrosine 110 to serine 124 is the BH3 element. Phosphoserine is present on residues serine 118 and serine 134. The disordered stretch occupies residues phenylalanine 125 to serine 145. Residues glycine 136–serine 145 are compositionally biased toward polar residues. Residue arginine 161 is modified to Omega-N-methylarginine.

It belongs to the Bcl-2 family. In terms of assembly, forms heterodimers with the anti-apoptotic proteins, Bcl-X(L), Bcl-2 and Bcl-W. Also binds protein S100A10. The Ser-75/Ser-99 phosphorylated form binds 14-3-3 proteins. Interacts with AKT1 and PIM3. Interacts (via BH3 domain) with NOL3 (via CARD domain); preventing the association of BAD with BCL2. Interacts with HIF3A (via C-terminus domain); the interaction reduces the binding between BAD and BAX. Interacts with GIMAP3/IAN4 and GIMAP5/IAN5. In terms of processing, phosphorylated on one or more of Ser-75, Ser-99, Ser-118 and Ser-134 in response to survival stimuli, which blocks its pro-apoptotic activity. Phosphorylation on Ser-99 or Ser-75 promotes heterodimerization with 14-3-3 proteins. This interaction then facilitates the phosphorylation at Ser-118, a site within the BH3 motif, leading to the release of Bcl-X(L) and the promotion of cell survival. Ser-99 is the major site of AKT/PKB phosphorylation, Ser-118 the major site of protein kinase A (CAPK) phosphorylation. Phosphorylation at Ser-99 by PKB/AKT1 is almost completely blocked by the apoptotic C-terminus cleavage product of PKN2 generated by caspases-3 activity during apoptosis. Post-translationally, methylation at Arg-94 and Arg-96 by PRMT1 inhibits Akt-mediated phosphorylation at Ser-99. As to expression, expressed in a wide variety of tissues.

Its subcellular location is the mitochondrion outer membrane. The protein localises to the cytoplasm. Its function is as follows. Promotes cell death. Successfully competes for the binding to Bcl-X(L), Bcl-2 and Bcl-W, thereby affecting the level of heterodimerization of these proteins with BAX. Can reverse the death repressor activity of Bcl-X(L), but not that of Bcl-2. Appears to act as a link between growth factor receptor signaling and the apoptotic pathways. This is Bcl2-associated agonist of cell death (BAD) from Homo sapiens (Human).